A 485-amino-acid chain; its full sequence is Membrane-bound lytic murein transglycosylase F (485 aa).

The N-terminal stretch at 1–29 is a signal peptide; it reads MFAHTALRQRCAKWLLATGLFLLLGACVE. The interval 30-267 is non-LT domain; the sequence is KPSTLERVKE…RLKDRYYGHV (238 aa). An LT domain region spans residues 268–485; it reads DVLGYVGAYT…DKPADKSSPM (218 aa). Glu-314 is a catalytic residue. The segment at 465–485 is disordered; sequence EGNLHVPGVNKDKPADKSSPM. A compositionally biased stretch (basic and acidic residues) spans 474–485; that stretch reads NKDKPADKSSPM.

The protein in the N-terminal section; belongs to the bacterial solute-binding protein 3 family. It in the C-terminal section; belongs to the transglycosylase Slt family.

It is found in the cell outer membrane. The enzyme catalyses Exolytic cleavage of the (1-&gt;4)-beta-glycosidic linkage between N-acetylmuramic acid (MurNAc) and N-acetylglucosamine (GlcNAc) residues in peptidoglycan, from either the reducing or the non-reducing ends of the peptidoglycan chains, with concomitant formation of a 1,6-anhydrobond in the MurNAc residue.. Functionally, murein-degrading enzyme that degrades murein glycan strands and insoluble, high-molecular weight murein sacculi, with the concomitant formation of a 1,6-anhydromuramoyl product. Lytic transglycosylases (LTs) play an integral role in the metabolism of the peptidoglycan (PG) sacculus. Their lytic action creates space within the PG sacculus to allow for its expansion as well as for the insertion of various structures such as secretion systems and flagella. The sequence is that of Membrane-bound lytic murein transglycosylase F from Pseudomonas putida (strain ATCC 47054 / DSM 6125 / CFBP 8728 / NCIMB 11950 / KT2440).